The primary structure comprises 20 residues: Alkaline phosphatase (20 aa).

In terms of tissue distribution, expressed by the venom gland.

It localises to the secreted. It carries out the reaction a phosphate monoester + H2O = an alcohol + phosphate. Has hemorrhagic activity. The sequence is that of Alkaline phosphatase from Deinagkistrodon acutus (Hundred-pace snake).